The chain runs to 201 residues: MARRPYDMLFKLLLIGDSGVGKTCILYRFSDDAFNTTFISTIGIDFKIKTIELKGKKIKLQIWDTAGQERFHTITTSYYRGAMGIMLVYDITNAKSFDNIAKWLRNIDEHASEDVVKMILGNKCDMSDRRVVSRERGEKIAQDHGISFHETSAKLNVHVDTAFYDLAEAILAKMPDSTDEQSRDTVNPVQPQRQSSSGGCC.

16-23 lines the GTP pocket; it reads GDSGVGKT. The short motif at 38–46 is the Effector region element; the sequence is FISTIGIDF. Residues 64 to 68, 122 to 125, and 152 to 154 each bind GTP; these read DTAGQ, NKCD, and SAK. A disordered region spans residues 175 to 201; the sequence is PDSTDEQSRDTVNPVQPQRQSSSGGCC. Residues 184–201 show a composition bias toward polar residues; it reads DTVNPVQPQRQSSSGGCC. Residues C200 and C201 are each lipidated (S-geranylgeranyl cysteine).

Belongs to the small GTPase superfamily. Rab family. In terms of assembly, interacts (GTP-bound form) with ehbp-1 (via C-terminal coiled coil). Interacts (GTP-bound form) with cnt-1 (via C-terminal ankyrin repeat). Interacts (GTP-bound form) with rab-5 GAP, tbc-2 (via putative coiled coil domain). Interacts (GTP-bound form) with amph-1. Almost ubiquitously expressed. Expressed in intestine, hypodermis, seam cells, body-wall muscles, many neurons, oviduct sheath cell, spermatheca, coelomocytes and pharyngeal and nerve ring.

The protein localises to the early endosome membrane. It localises to the late endosome membrane. Its subcellular location is the golgi apparatus membrane. It is found in the endosome membrane. It carries out the reaction GTP + H2O = GDP + phosphate + H(+). Rab activation is generally mediated by a guanine exchange factor (GEF), while inactivation through hydrolysis of bound GTP is catalyzed by a GTPase activating protein (GAP). Tbc-4 is a likely GAP of this rab. Denn-4 is a putative GEF of this rab. In terms of biological role, the small GTPases Rab are key regulators of intracellular membrane trafficking, from the formation of transport vesicles to their fusion with membranes. Rabs cycle between an inactive GDP-bound form and an active GTP-bound form that is able to recruit to membranes different set of downstream effectors directly responsible for vesicle formation, movement, tethering and fusion. Required for basolateral endocytic recycling, the return of macromolecules and fluid from endosomes to the plasma membrane, in polarized epithelial cells of the intestine upstream of rme-1. Involved in the formation of the endosomal tubular network that is required for basolateral recycling of clathrin-independent endocytic cargo such as daf-4 in the intestine. Required for the recruitment of cnt-1 effector to endosomal membranes in the intestinal epithelium, which is important for the regulation of levels of endosomal phosphatidylinositol-4,5-bisphosphate, a key phosphoinositide in membrane traffic, and for the recruitment of endosomal membrane-bending proteins, rme-1 and sdpn-1. Recruits the rab-5 GTPase-activating protein tbc-2 to endosomes where it then inactivates rab-5 resulting in removal of rab-5 from membranes, which is necessary for cargo transport from early endosomes to recycling endosomes in the basolateral intestine. Regulates recycling of synaptic membrane AMPA glutamate receptor, glr-1, from intracellular endosomal compartments back to synapses in a cholesterol-dependent endocytosis pathway functioning after clathrin-independent endocytosis in command interneurons. Regulates neuropeptide release from dense core vesicles (DCVs) of cholinergic motoneurons in cooperation with rab-5. They reciprocally recruit each other's inactivating GAP molecule leading to local exclusion of one or the other rab protein at the Golgi-endosomal interphase at an essential stage during DCV sorting. Regulates membrane trafficking of membranes and dendrite proteins from the Golgi and/or endosomal compartments to plasma membrane during dendrite morphogenesis together with the exocyst complex in the multi-dendritic PVD sensory neurons acting in a cell-autonomous manner and requiring its GTPase activity. Functions cell-autonomously together with the exocyst complex to regulate dendrite morphogenesis and anterior-posterior patterning of the PVD neurons dendritic arbor by balancing the anterograde and retrograde transport via molecular motors unc-116 (kinesin heavy chain) and dhc-1 (dynein heavy chain) to appropriately transport branching factors, such as dma-1, to the specific subcellular regions of the developing dendrite in its GTPase activity-dependent manner. This Caenorhabditis elegans protein is Ras-related protein Rab-10.